Reading from the N-terminus, the 404-residue chain is Chorismate synthase (404 aa).

Arginine 47 is an NADP(+) binding site. Residues 156–158 (RSS), 281–282 (NA), glycine 321, 336–340 (KPTST), and arginine 363 contribute to the FMN site.

Belongs to the chorismate synthase family. As to quaternary structure, homotetramer. FMNH2 is required as a cofactor.

The catalysed reaction is 5-O-(1-carboxyvinyl)-3-phosphoshikimate = chorismate + phosphate. The protein operates within metabolic intermediate biosynthesis; chorismate biosynthesis; chorismate from D-erythrose 4-phosphate and phosphoenolpyruvate: step 7/7. Functionally, catalyzes the anti-1,4-elimination of the C-3 phosphate and the C-6 proR hydrogen from 5-enolpyruvylshikimate-3-phosphate (EPSP) to yield chorismate, which is the branch point compound that serves as the starting substrate for the three terminal pathways of aromatic amino acid biosynthesis. This reaction introduces a second double bond into the aromatic ring system. The polypeptide is Chorismate synthase (Rhodopirellula baltica (strain DSM 10527 / NCIMB 13988 / SH1)).